Here is a 132-residue protein sequence, read N- to C-terminus: Telomere bouquet protein 1 (132 aa).

As to quaternary structure, interacts with bqt2 and sad1. The bqt1-bqt2-sad1 complex binds rap1.

Its subcellular location is the cytoplasm. It is found in the cytoskeleton. It localises to the microtubule organizing center. The protein resides in the spindle pole body. The protein localises to the chromosome. Its subcellular location is the telomere. Its function is as follows. Involved in chromosome segregation. During meiotic prophase, connects telomeres to the spindle pole body by forming a bridge between the telomere protein rap1 and the spindle pole body protein sad1. This chain is Telomere bouquet protein 1 (bqt1), found in Schizosaccharomyces pombe (strain 972 / ATCC 24843) (Fission yeast).